Consider the following 116-residue polypeptide: Distal membrane-arm assembly complex protein 1 (116 aa).

The interval 1–39 (MGSRLSQPFESYITAPPGTAAAPAKPAPPATPGAPTSPA) is disordered. Residues 14–24 (TAPPGTAAAPA) are compositionally biased toward low complexity. Helical transmembrane passes span 52–69 (VLSG…YWVA) and 82–104 (WTIT…GIVV).

As to quaternary structure, interacts with incompletely assembled mitochondrial NADH:ubiquinone oxidoreductase complex (complex I).

It localises to the mitochondrion inner membrane. Required for the assembly of the mitochondrial NADH:ubiquinone oxidoreductase complex (complex I). Involved in the assembly of the distal region of complex I. The protein is Distal membrane-arm assembly complex protein 1 of Homo sapiens (Human).